The sequence spans 92 residues: C-C motif chemokine 4 (92 aa).

Positions methionine 1–serine 23 are cleaved as a signal peptide. Cystine bridges form between cysteine 34–cysteine 58 and cysteine 35–cysteine 74.

Belongs to the intercrine beta (chemokine CC) family. Homodimer. Interacts with CCR5.

The protein resides in the secreted. Monokine with inflammatory and chemokinetic properties. In Sus scrofa (Pig), this protein is C-C motif chemokine 4 (CCL4).